Here is a 551-residue protein sequence, read N- to C-terminus: Cleavage and polyadenylation specificity factor subunit 6 (551 aa).

The segment at 1–213 is necessary for interaction with NXF1; it reads MADGVDHIDI…RGRFPGAVPG (213 aa). An RRM domain is found at 81–161; sequence IALYIGNLTW…QNPVVTPCNK (81 aa). Positions 81–161 are necessary for interaction with NUDT21/CPSF5; sequence IALYIGNLTW…QNPVVTPCNK (81 aa). The segment at 81–161 is necessary for nuclear paraspeckles localization; it reads IALYIGNLTW…QNPVVTPCNK (81 aa). A Phosphothreonine modification is found at threonine 157. A compositionally biased stretch (polar residues) spans 169 to 180; the sequence is MQSRKTTQSGQM. Disordered regions lie at residues 169-411 and 477-551; these read MQSR…PLSE and LHGI…YRHR. The GAR motif lies at 202–206; the sequence is RGRGR. Residues 207-219 show a composition bias toward low complexity; the sequence is FPGAVPGGDRFPG. Pro residues-rich tracts occupy residues 220–265, 285–366, and 377–388; these read PAGP…PLAG, GQPP…PPPT, and GPPPTDPYGRPP. Positions 358–551 are (Microbial infection) Binds to HIV-1 capsid protein p24 (CA); the sequence is NPAFFPPPTN…RDREREYRHR (194 aa). The segment covering 389–404 has biased composition (basic and acidic residues); it reads PYDRGDYGPPGREMDT. Phosphothreonine is present on residues threonine 404 and threonine 407. Residues 404–551 form a sufficient for nuclear speckle localization region; it reads TARTPLSEAE…RDREREYRHR (148 aa). The tract at residues 405–551 is necessary for RNA-binding; sequence ARTPLSEAEF…RDREREYRHR (147 aa). The segment at 481-551 is necessary for interaction with SRSF3, SRSF7 and TRA2B/SFRS10; it reads ESKSYGSGSR…RDREREYRHR (71 aa). Positions 489–503 are enriched in basic and acidic residues; the sequence is SRRERSRERDHSRSR. Positions 490–551 are arg/Ser-rich domain; sequence RRERSRERDH…RDREREYRHR (62 aa). Serine 494, serine 500, serine 511, serine 513, and serine 525 each carry phosphoserine. The segment covering 504–514 has biased composition (basic residues); that stretch reads EKSRRHKSRSR. A sufficient for nuclear targeting region spans residues 510–551; that stretch reads KSRSRDRHDDYYRERSRERERHRDRDRDRDRERDREREYRHR. A compositionally biased stretch (basic and acidic residues) spans 515 to 551; it reads DRHDDYYRERSRERERHRDRDRDRDRERDREREYRHR.

It belongs to the RRM CPSF6/7 family. Component of the cleavage factor Im (CFIm) complex which is a heterotetramer composed of two subunits of NUDT21/CPSF5 and two subunits of CPSF6 or CPSF7 or a heterodimer of CPSF6 and CPSF7. The cleavage factor Im (CFIm) complex associates with the CPSF and CSTF complexes to promote the assembly of the core mRNA 3'-processing machinery. Associates with the exon junction complex (EJC). Associates with the 80S ribosome particle. Interacts (via the RRM domain) with NUDT21/CPSF5; this interaction is direct and enhances binding to RNA. Interacts (via Arg/Ser-rich domain) with FIP1L1 (preferentially via unphosphorylated form and Arg/Glu/Asp-rich domain); this interaction mediates, at least in part, the interaction between the CFIm and CPSF complexes and may be inhibited by CPSF6 hyper-phosphorylation. Interacts (via N-terminus) with NXF1; this interaction is direct. Interacts with SRSF3. Interacts with SRSF7. Interacts with SNRNP70. Interacts with TRA2B/SFRS10. Interacts with UPF1. Interacts with UPF3B. Interacts with VIRMA. Interacts (via Arg/Ser-rich domain) with TNPO3; promoting nuclear import of CPSF6 independently of its phosphorylation status. Interacts with YTHDC1. As to quaternary structure, (Microbial infection) Interacts (via C-terminus) with HIV-1 capsid protein p24 (CA). In terms of processing, phosphorylated. Phosphorylated in the Arg/Ser-rich domain by SRPK1, in vitro. Symmetrically dimethylated on arginine residues in the GAR motif by PRMT5 in a WDR77- and CLNS1A-dependent manner. Asymmetrically dimethylated on arginine residues in the GAR motif by PRMT1.

It is found in the nucleus. It localises to the nucleoplasm. Its subcellular location is the nucleus speckle. The protein localises to the cytoplasm. Component of the cleavage factor Im (CFIm) complex that functions as an activator of the pre-mRNA 3'-end cleavage and polyadenylation processing required for the maturation of pre-mRNA into functional mRNAs. CFIm contributes to the recruitment of multiprotein complexes on specific sequences on the pre-mRNA 3'-end, so called cleavage and polyadenylation signals (pA signals). Most pre-mRNAs contain multiple pA signals, resulting in alternative cleavage and polyadenylation (APA) producing mRNAs with variable 3'-end formation. The CFIm complex acts as a key regulator of cleavage and polyadenylation site choice during APA through its binding to 5'-UGUA-3' elements localized in the 3'-untranslated region (UTR) for a huge number of pre-mRNAs. CPSF6 enhances NUDT21/CPSF5 binding to 5'-UGUA-3' elements localized upstream of pA signals and promotes RNA looping, and hence activates directly the mRNA 3'-processing machinery. Plays a role in mRNA export. In terms of biological role, (Microbial infection) Binds HIV-1 capsid-nucleocapsid (HIV-1 CA-NC) complexes and might thereby promote the integration of the virus in the nucleus of dividing cells (in vitro). This Homo sapiens (Human) protein is Cleavage and polyadenylation specificity factor subunit 6.